A 165-amino-acid chain; its full sequence is Anterior gradient protein 3 (165 aa).

An N-terminal signal peptide occupies residues 1-20 (MLHSALALCLLLITVSSNLA). The Prevents secretion from ER signature appears at 162–165 (QSEL).

This sequence belongs to the AGR family. Interacts with LYPD3 and DAG1 (alphaDAG1). As to expression, expressed in the ciliated cells of the airway epithelium. Not detected in the mucous cells.

The protein localises to the endoplasmic reticulum. The protein resides in the cytoplasm. Its function is as follows. Required for calcium-mediated regulation of ciliary beat frequency and mucociliary clearance in the airway. Might be involved in the regulation of intracellular calcium in tracheal epithelial cells. The chain is Anterior gradient protein 3 from Mus musculus (Mouse).